The primary structure comprises 263 residues: Protein TILLER ANGLE CONTROL 1 (263 aa).

Positions Gly-55 to Thr-61 match the IGT motif motif. Residues Gly-243–Ala-263 are disordered.

It belongs to the TAC family. Highly expressed in leaf sheath pulvinus. Expressed in shoot apical meristem and leaves.

Its function is as follows. Involved in the regulation of leaf growth angle. Promotes horizontal shoot growth. This Zea mays (Maize) protein is Protein TILLER ANGLE CONTROL 1.